We begin with the raw amino-acid sequence, 205 residues long: Glycerol-3-phosphate acyltransferase (205 aa).

The next 6 membrane-spanning stretches (helical) occupy residues 5 to 25, 56 to 76, 84 to 104, 114 to 134, 144 to 164, and 165 to 185; these read LIAT…YIIA, ICVL…AIAL, VPAL…YFGF, IGVV…VAIL, LGSL…LPFF, and HYPL…LWRH.

It belongs to the PlsY family. As to quaternary structure, probably interacts with PlsX.

The protein resides in the cell membrane. The enzyme catalyses an acyl phosphate + sn-glycerol 3-phosphate = a 1-acyl-sn-glycero-3-phosphate + phosphate. It functions in the pathway lipid metabolism; phospholipid metabolism. In terms of biological role, catalyzes the transfer of an acyl group from acyl-phosphate (acyl-PO(4)) to glycerol-3-phosphate (G3P) to form lysophosphatidic acid (LPA). This enzyme utilizes acyl-phosphate as fatty acyl donor, but not acyl-CoA or acyl-ACP. The polypeptide is Glycerol-3-phosphate acyltransferase (Shouchella clausii (strain KSM-K16) (Alkalihalobacillus clausii)).